We begin with the raw amino-acid sequence, 142 residues long: Alpha-lactalbumin (142 aa).

The first 19 residues, 1-19, serve as a signal peptide directing secretion; that stretch reads MRFFVPLFLVGILFPAILA. The 123-residue stretch at 20–142 folds into the C-type lysozyme domain; sequence KQFTKCELSQ…KLEQWLCEKL (123 aa). Cystine bridges form between Cys-25/Cys-139, Cys-47/Cys-130, Cys-80/Cys-96, and Cys-92/Cys-110. Residues Thr-57 and Gln-58 each contribute to the Ca(2+) site. Asn-64 is a glycosylation site (N-linked (GlcNAc...) asparagine). Glu-68 provides a ligand contact to Zn(2+). Asn-90 carries an N-linked (GlcNAc...) asparagine; atypical; partial glycan. 7 residues coordinate Ca(2+): Lys-98, Leu-100, Asp-101, Asp-102, Asp-103, Asp-106, and Asp-107. Glu-135 contributes to the Zn(2+) binding site.

The protein belongs to the glycosyl hydrolase 22 family. Lactose synthase (LS) is a heterodimer of a catalytic component, beta1,4-galactosyltransferase (beta4Gal-T1) and a regulatory component, alpha-lactalbumin (LA). As to expression, mammary gland specific. Secreted in milk.

It is found in the secreted. Its function is as follows. Regulatory subunit of lactose synthase, changes the substrate specificity of galactosyltransferase in the mammary gland making glucose a good acceptor substrate for this enzyme. This enables LS to synthesize lactose, the major carbohydrate component of milk. In other tissues, galactosyltransferase transfers galactose onto the N-acetylglucosamine of the oligosaccharide chains in glycoproteins. The polypeptide is Alpha-lactalbumin (LALBA) (Homo sapiens (Human)).